A 1098-amino-acid polypeptide reads, in one-letter code: Unconventional myosin-If (1098 aa).

In terms of domain architecture, Myosin motor spans 17-690 (SGVDDMVLLP…SLFLLEEVRE (674 aa)). Residue 110-117 (GESGAGKT) coordinates ATP. An actin-binding region spans residues 579–589 (PHYIRCIKPNE). In terms of domain architecture, IQ spans 693–722 (FDGFARTIQKAWRRHVAVRKYEEMREEASN). In terms of domain architecture, TH1 spans 728 to 917 (KERRRNSINR…GRTLTVSVGD (190 aa)). Disordered regions lie at residues 913–1009 (VSVG…EFLN) and 1021–1044 (KRSV…THGP). Residues 924–937 (KPTRKGMAKGKPRR) show a composition bias toward basic residues. Residue S1023 is modified to Phosphoserine. The region spanning 1041–1098 (THGPRCRALYQYVGQDVDELSFNVNEVIEILMEDPSGWWKGRLHGQEGLFPGNYVEKI) is the SH3 domain.

Belongs to the TRAFAC class myosin-kinesin ATPase superfamily. Myosin family.

Its function is as follows. Myosins are actin-based motor molecules with ATPase activity. Unconventional myosins serve in intracellular movements. Their highly divergent tails are presumed to bind to membranous compartments, which would be moved relative to actin filaments. The sequence is that of Unconventional myosin-If (MYO1F) from Homo sapiens (Human).